A 335-amino-acid chain; its full sequence is BTB and MATH domain-containing protein 39 (335 aa).

Positions M14–L141 constitute an MATH domain. Residues A161 to V226 form the BTB domain.

The protein is BTB and MATH domain-containing protein 39 of Caenorhabditis briggsae.